The chain runs to 233 residues: Orotidine 5'-phosphate decarboxylase (233 aa).

Residues Asp13, Lys35, 62–71 (DLKFHDIPNT), Thr122, Arg182, Gln191, Gly211, and Arg212 each bind substrate. The Proton donor role is filled by Lys64.

This sequence belongs to the OMP decarboxylase family. Type 1 subfamily. As to quaternary structure, homodimer.

It carries out the reaction orotidine 5'-phosphate + H(+) = UMP + CO2. It participates in pyrimidine metabolism; UMP biosynthesis via de novo pathway; UMP from orotate: step 2/2. Catalyzes the decarboxylation of orotidine 5'-monophosphate (OMP) to uridine 5'-monophosphate (UMP). This chain is Orotidine 5'-phosphate decarboxylase, found in Pseudomonas fluorescens (strain ATCC BAA-477 / NRRL B-23932 / Pf-5).